Here is a 156-residue protein sequence, read N- to C-terminus: Flagellar assembly factor FliW (156 aa).

The protein belongs to the FliW family. Interacts with translational regulator CsrA and flagellin(s).

It is found in the cytoplasm. Its function is as follows. Acts as an anti-CsrA protein, binds CsrA and prevents it from repressing translation of its target genes, one of which is flagellin. Binds to flagellin and participates in the assembly of the flagellum. The chain is Flagellar assembly factor FliW from Lachnoclostridium phytofermentans (strain ATCC 700394 / DSM 18823 / ISDg) (Clostridium phytofermentans).